A 502-amino-acid chain; its full sequence is MSSEEKYIMAIDQGTTSSRAIIFNKKGEKIASSQKEFPQIFPQAGWVEHNANQIWNSVQSVIAGAFIESSIKPGQIEAIGITNQRETTVVWDKKTGLPIYNAIVWQSRQTAPIADQLKQEGHTNMIHEKTGLVIDAYFSATKVRWILDHVPGAQERAEKGELLFGTIDTWLVWKLTDGLVHVTDYSNAARTMLYNIKELKWDDEILELLNIPKAMLPEVKSNSEVYGKTTPFHFYGGEVPISGMAGDQQAALFGQLAFEPGMVKNTYGTGSFIIMNTGEEMQLSQNNLLTTIGYGINGKVHYALEGSIFIAGSAIQWLRDGLRMIETSSESEGLAQSSTSDDEVYVVPAFTGLGAPYWDSNARGSVFGLTRGTSKEDFVKATLQSIAYQVRDVIDTMQVDSGIDIQQLRVDGGAAMNNLLMQFQADILGIDIARAKNLETTALGAAFLAGLSVGYWESMDELKELNATGQLFQATMNESRKEKLYKGWRKAVKATQVFAQED.

An ADP-binding site is contributed by Thr-15. 3 residues coordinate ATP: Thr-15, Thr-16, and Ser-17. Thr-15 lines the sn-glycerol 3-phosphate pocket. Arg-19 is an ADP binding site. The sn-glycerol 3-phosphate site is built by Arg-85, Glu-86, and Tyr-137. The glycerol site is built by Arg-85, Glu-86, and Tyr-137. His-233 carries the phosphohistidine; by HPr modification. A sn-glycerol 3-phosphate-binding site is contributed by Asp-247. Residues Asp-247 and Gln-248 each coordinate glycerol. The ADP site is built by Thr-269 and Gly-312. Residues Thr-269, Gly-312, Gln-316, and Gly-413 each contribute to the ATP site. 2 residues coordinate ADP: Gly-413 and Asn-417.

The protein belongs to the FGGY kinase family. Homotetramer and homodimer (in equilibrium). The phosphoenolpyruvate-dependent sugar phosphotransferase system (PTS), including enzyme I, and histidine-containing protein (HPr) are required for the phosphorylation, which leads to the activation of the enzyme.

It carries out the reaction glycerol + ATP = sn-glycerol 3-phosphate + ADP + H(+). The protein operates within polyol metabolism; glycerol degradation via glycerol kinase pathway; sn-glycerol 3-phosphate from glycerol: step 1/1. With respect to regulation, activated by phosphorylation and inhibited by fructose 1,6-bisphosphate (FBP). Its function is as follows. Key enzyme in the regulation of glycerol uptake and metabolism. Catalyzes the phosphorylation of glycerol to yield sn-glycerol 3-phosphate. The protein is Glycerol kinase of Streptococcus agalactiae serotype Ia (strain ATCC 27591 / A909 / CDC SS700).